Reading from the N-terminus, the 215-residue chain is 3-demethoxyubiquinol 3-hydroxylase (215 aa).

Fe cation is bound by residues E64, E94, H97, E146, E178, and H181.

Belongs to the COQ7 family. Requires Fe cation as cofactor.

It is found in the cell membrane. The catalysed reaction is a 5-methoxy-2-methyl-3-(all-trans-polyprenyl)benzene-1,4-diol + AH2 + O2 = a 3-demethylubiquinol + A + H2O. It participates in cofactor biosynthesis; ubiquinone biosynthesis. In terms of biological role, catalyzes the hydroxylation of 2-nonaprenyl-3-methyl-6-methoxy-1,4-benzoquinol during ubiquinone biosynthesis. The polypeptide is 3-demethoxyubiquinol 3-hydroxylase (Coxiella burnetii (strain RSA 331 / Henzerling II)).